The primary structure comprises 864 residues: Putative Gly-rich membrane protein Bcell_0380 (864 aa).

Residues 7–27 traverse the membrane as a helical segment; the sequence is ITFLAAFICIIFVIYAIYHSV. Positions 372-399 are disordered; the sequence is TVENSFYDEDTTGQSDTGKGTPMSTADM. The span at 383 to 395 shows a compositional bias: polar residues; that stretch reads TGQSDTGKGTPMS.

It localises to the cell membrane. The sequence is that of Putative Gly-rich membrane protein Bcell_0380 from Evansella cellulosilytica (strain ATCC 21833 / DSM 2522 / FERM P-1141 / JCM 9156 / N-4) (Bacillus cellulosilyticus).